Here is a 252-residue protein sequence, read N- to C-terminus: D-aminoacyl-tRNA deacylase (252 aa).

Belongs to the DtdA deacylase family. Monomer. Zn(2+) is required as a cofactor.

The catalysed reaction is a D-aminoacyl-tRNA + H2O = a tRNA + a D-alpha-amino acid + H(+). The enzyme catalyses glycyl-tRNA(Ala) + H2O = tRNA(Ala) + glycine + H(+). Functionally, D-aminoacyl-tRNA deacylase with broad substrate specificity. By recycling D-aminoacyl-tRNA to D-amino acids and free tRNA molecules, this enzyme counteracts the toxicity associated with the formation of D-aminoacyl-tRNA entities in vivo. The chain is D-aminoacyl-tRNA deacylase from Pyrobaculum neutrophilum (strain DSM 2338 / JCM 9278 / NBRC 100436 / V24Sta) (Thermoproteus neutrophilus).